An 883-amino-acid chain; its full sequence is Integrator complex subunit 6-A (883 aa).

The VWFA domain occupies isoleucine 3 to valine 227. Residues methionine 626 to glutamate 633 carry the Inhibitory loop motif.

It belongs to the Integrator subunit 6 family. Component of the Integrator complex, composed of core subunits INTS1, INTS2, INTS3, INTS4, INTS5, INTS6, INTS7, INTS8, INTS9/RC74, INTS10, INTS11/CPSF3L, INTS12, INTS13, INTS14 and INTS15. The core complex associates with protein phosphatase 2A subunits PPP2CA and PPP2R1A, to form the Integrator-PP2A (INTAC) complex.

The protein localises to the nucleus. Its subcellular location is the chromosome. In terms of biological role, component of the integrator complex, a multiprotein complex that terminates RNA polymerase II (Pol II) transcription in the promoter-proximal region of genes. The integrator complex provides a quality checkpoint during transcription elongation by driving premature transcription termination of transcripts that are unfavorably configured for transcriptional elongation: the complex terminates transcription by (1) catalyzing dephosphorylation of the C-terminal domain (CTD) of Pol II subunit POLR2A/RPB1 and SUPT5H/SPT5, (2) degrading the exiting nascent RNA transcript via endonuclease activity and (3) promoting the release of Pol II from bound DNA. The integrator complex is also involved in terminating the synthesis of non-coding Pol II transcripts, such as enhancer RNAs (eRNAs), small nuclear RNAs (snRNAs), telomerase RNAs and long non-coding RNAs (lncRNAs). Within the integrator complex, INTS6 acts as a molecular adapter that promotes assembly of protein phosphatase 2A (PP2A) subunits to the integrator core complex, promoting recruitment of PP2A to transcription pause-release checkpoint. In Xenopus laevis (African clawed frog), this protein is Integrator complex subunit 6-A (ints6-a).